The sequence spans 230 residues: Ion-translocating oxidoreductase complex subunit E (230 aa).

The next 6 helical transmembrane spans lie at alanine 18–alanine 38, leucine 39–isoleucine 59, isoleucine 69–alanine 89, glycine 93–glycine 113, valine 124–valine 144, and serine 182–leucine 202.

It belongs to the NqrDE/RnfAE family. As to quaternary structure, the complex is composed of six subunits: RnfA, RnfB, RnfC, RnfD, RnfE and RnfG.

The protein localises to the cell inner membrane. In terms of biological role, part of a membrane-bound complex that couples electron transfer with translocation of ions across the membrane. The chain is Ion-translocating oxidoreductase complex subunit E from Vibrio parahaemolyticus serotype O3:K6 (strain RIMD 2210633).